The sequence spans 216 residues: Large ribosomal subunit protein uL3 (216 aa).

The residue at position 153 (Gln-153) is an N5-methylglutamine.

This sequence belongs to the universal ribosomal protein uL3 family. In terms of assembly, part of the 50S ribosomal subunit. Forms a cluster with proteins L14 and L19. In terms of processing, methylated by PrmB.

Functionally, one of the primary rRNA binding proteins, it binds directly near the 3'-end of the 23S rRNA, where it nucleates assembly of the 50S subunit. The protein is Large ribosomal subunit protein uL3 of Burkholderia multivorans (strain ATCC 17616 / 249).